The sequence spans 35 residues: Cupiennin-2e (35 aa).

The residue at position 35 (E35) is a Glutamic acid 1-amide.

Expressed by the venom gland.

It localises to the secreted. The polypeptide is Cupiennin-2e (Cupiennius salei (American wandering spider)).